The following is a 373-amino-acid chain: Probable jasmonic acid carboxyl methyltransferase 1 (373 aa).

Residue Tyr-18 coordinates S-adenosyl-L-homocysteine. Gln-25 contributes to the jasmonate binding site. 6 residues coordinate S-adenosyl-L-homocysteine: Cys-59, Asn-64, Asp-96, Leu-97, Ser-135, and Phe-136. Jasmonate contacts are provided by His-156 and Trp-157. Mg(2+) contacts are provided by Asn-174, Asp-260, Phe-262, and Asn-263.

This sequence belongs to the methyltransferase superfamily. Type-7 methyltransferase family. Requires Mg(2+) as cofactor.

The protein localises to the cytoplasm. The protein resides in the nucleus. The enzyme catalyses jasmonate + S-adenosyl-L-methionine = methyl (-)-jasmonate + S-adenosyl-L-homocysteine. Its pathway is lipid metabolism; oxylipin biosynthesis. Its function is as follows. Catalyzes the methylation of jasmonate into methyljasmonate, a plant volatile that acts as an important cellular regulator mediating diverse developmental processes and defense responses. This chain is Probable jasmonic acid carboxyl methyltransferase 1, found in Theobroma cacao (Cacao).